The chain runs to 1964 residues: MEDRRAERSCEQACASLQRQDYDMALQHCTDALLSLGQYSMADFTGPCPVEVERIKIESLLYRIASFLQLKNYGQADEDCRHVLGEGLAKGERAFRAVLCCMQLKGKLQLVSSILAKSLSGESLNGMVTKDLTRLKTLLTETETATSNVLSGCHVEDLDEGSCNGWHFRPPPRGITSSEEYTLCKRFLEQGICRYGAQCTSAHSQEELAEWQKRYASRLIKLKQQSENKQLSGSYMETLIEKWMSSLSPEKVLSECIEGVQVEHSPDLSVTVNTKKSHQTWTFALTCKPARMLYRVALLYDAHRPHFSIIAISAGDSTTQVSQEVPENCQEWIGGKMAQNGLDHYVYKVGIAFNTEIFGTFRQTIVFDFGLEPVLMQRVMIDAASTEDLEYLMHAKRQLVTTAKRWDSSSKTIVDFEPNETTDLEKSLLIRYQIPLSADQLFTQSVLDKSLTKTNYQARLHDLLYIEEIAQYKEVSRFNLKVQLQILASFMLTGVSGGAKYAQNGQLFGRFKLTETLSEDTLAGRLVMTRVNAVYLLPVPKEKLVQSQGTKEKVYEATIEEKTKDYVFLRISRECCEELSLRPDCDIQVELQFQLNRLPLCEMHYALDRIKDNAVLFPDISMTPTIPWSPNRQWDEQLDPRLNAKQKEAVLAITTPLSIQLPPVLIIGPYGTGKTFTLAQAAKHILQQQETRILICTHSNSAADLYIKDYLHPYVEAGNPQARPLRVYFRNRWVKTVHPVVHQYCLISSTQSTFQMPQKEDILKHRVVVVTLSTSQYLCQLDLEPGFFTHVLLDEAAQAMECETIMPLALATKNTRIVLAGDHMQLSPFVYSEFARERNLHVSLLDRLYEHYPAEFPCRILLCENYRSHEAIINYTSELFYEGKLMASGKQPAHKDFYPLTFFTARGEDVQEKNSTAFYNNAEVFEVVERVEELRRKWPVAWGKLDDGSIGVVTPYADQVFRIRAELRKKRLSDVNVERVLNVQGKQFRVLFLSTVRTRHTCKHKQTPIKKKEQLLEDSTEDLDYGFLSNYKLLNTAITRAQSLVAVVGDPVALCSIGRCRKFWERFIALCHENHSLHGITFEQIKAQLEALELKKTYVLNPLAPEFIPRALRLQHSGNSSRQQQSPPKVKSLYHPQSDHFQSDGIVQPNPSVLIGNPIRAYTPPPPLGPHPNLGKSPSPVQRIDPHTGTSILYVPAVYGGNVVMSVPLPVPWTGYQGRFAVDPRIITHQAAMAYNMNLLHTHGRGSPIPYGLGHHPPVSLGQPQSQHAEKDQQEQNRNGKTDTNNPGPEINKIRTPEKKPTEPKQVDLESNPQNRSPESRPGVVYSNTKFPRKDHLNPRHINNLPLPAPHAQYAIPSRHFHPLPQLPRPPFPASQPHTLLNQQQNNLPEQPNQMAPQPNQVAPQPNQMTPQPNQVAPQPNQVVQQQSQAPPQAPQPAPQLSPAFQAGPTNAFFNNAVAHRPQSPAAEAVGPEQPPPPGLPDGHSPLRAITQPGPILASPLNNFVDESSPGLPIEEALDGVHGSVALETLRQQQARLQQWSEHHAYLSQGGIPYSHHHHPHLPHLPHTPIGLHQPPVRAEWKVAGRADDETETTFSRFQDLLRELSHRDQGDTGELAEMPPPQSRLLQYRQVQPRSPPAVPSPPSSTDHSSQFANFNDSSRDIEVANSPAFPQRLPPQLFGSPFSLPSEHLAPPPLKYLAPEGAWNFANLQQNHLIGPGFPYGLPPLPPRPPQNPFIHIQNHQHAAGQEPFHPLSSRTVSASSLPSLEEYEPRGPGRPLYQRRISSSSAQPCVEEASAPQDSLAQGKESQGHSNPPAFNFPAPESWANTTSSAPYQNIPCNGSSRTSQPRELIAPPKTVKPPEDQLKPESGEVSSSFNYSMLQHLGQFPPLMPNKQIAESANCSSQQSPAGSKPAMSYASALRAPPKPRPPPEQAKKGSDPLSLLQELSLGSSPGSNGFYSYFK.

The C3H1-type zinc finger occupies 178 to 206 (SEEYTLCKRFLEQGICRYGAQCTSAHSQE). Ser-248 is modified (phosphoserine). 668-675 (GPYGTGKT) serves as a coordination point for ATP. The DEAA box motif lies at 794-797 (DEAA). Residues 1116-1127 (HSGNSSRQQQSP) are compositionally biased toward polar residues. The interval 1116-1135 (HSGNSSRQQQSPPKVKSLYH) is disordered. A Phosphothreonine modification is found at Thr-1163. Position 1245 is an omega-N-methylarginine (Arg-1245). Disordered stretches follow at residues 1248 to 1350 (PIPY…LPAP), 1360 to 1379 (HFHP…QPHT), 1388 to 1449 (LPEQ…QAGP), 1463 to 1491 (QSPA…RAIT), 1631 to 1655 (QVQP…QFAN), and 1743 to 1964 (QHAA…SYFK). Basic and acidic residues-rich tracts occupy residues 1268–1281 (HAEK…RNGK) and 1292–1308 (NKIR…KQVD). Positions 1365–1374 (PQLPRPPFPA) are enriched in pro residues. The segment covering 1388 to 1431 (LPEQPNQMAPQPNQVAPQPNQMTPQPNQVAPQPNQVVQQQSQAP) has biased composition (low complexity). The segment covering 1635–1644 (RSPPAVPSPP) has biased composition (pro residues). Phosphoserine is present on residues Ser-1636, Ser-1760, Ser-1763, and Ser-1788. Residues 1755-1765 (SSRTVSASSLP) show a composition bias toward polar residues. Composition is skewed to polar residues over residues 1799–1813 (PQDS…QGHS) and 1826–1849 (WANT…TSQP). Residues 1860-1870 (KPPEDQLKPES) show a composition bias toward basic and acidic residues. 2 stretches are compositionally biased toward polar residues: residues 1872-1881 (EVSSSFNYSM) and 1897-1910 (IAES…QSPA). A compositionally biased stretch (low complexity) spans 1941–1956 (PLSLLQELSLGSSPGS).

This sequence belongs to the DNA2/NAM7 helicase family. In terms of assembly, interacts with POLR2A. Interacts with SMYD3; the interaction may bridge SMYD3 and RNA polymerase II. Interacts with SMYD2.

It is found in the nucleus. Functionally, may act as a helicase that plays a role in RNA metabolism in multiple tissues and organs within the developing embryo. The sequence is that of Probable helicase with zinc finger domain (Helz) from Mus musculus (Mouse).